The sequence spans 494 residues: Cytochrome P450 2A10 (494 aa).

Lysine 379 bears the N6-acetyllysine mark. A heme-binding site is contributed by cysteine 439.

Belongs to the cytochrome P450 family. It depends on heme as a cofactor. In terms of tissue distribution, expressed in liver and lung as well as in nasal tissues.

It is found in the endoplasmic reticulum membrane. The protein localises to the microsome membrane. The enzyme catalyses an organic molecule + reduced [NADPH--hemoprotein reductase] + O2 = an alcohol + oxidized [NADPH--hemoprotein reductase] + H2O + H(+). Functionally, catalyzes the oxygenation of a variety of substrates, including ethanol and procarcinogens such as N-nitrosodiethylamine and phenacetin. Exhibits a high coumarin 7-hydroxylase activity. Converts also testosterone to androstenedione. The protein is Cytochrome P450 2A10 (CYP2A10) of Oryctolagus cuniculus (Rabbit).